Here is a 169-residue protein sequence, read N- to C-terminus: S-ribosylhomocysteine lyase (169 aa).

Fe cation-binding residues include His-54, His-58, and Cys-128.

The protein belongs to the LuxS family. In terms of assembly, homodimer. Fe cation serves as cofactor.

The catalysed reaction is S-(5-deoxy-D-ribos-5-yl)-L-homocysteine = (S)-4,5-dihydroxypentane-2,3-dione + L-homocysteine. Functionally, involved in the synthesis of autoinducer 2 (AI-2) which is secreted by bacteria and is used to communicate both the cell density and the metabolic potential of the environment. The regulation of gene expression in response to changes in cell density is called quorum sensing. Catalyzes the transformation of S-ribosylhomocysteine (RHC) to homocysteine (HC) and 4,5-dihydroxy-2,3-pentadione (DPD). The polypeptide is S-ribosylhomocysteine lyase (Shewanella baltica (strain OS223)).